A 411-amino-acid chain; its full sequence is 2,3-bisphosphoglycerate-independent phosphoglycerate mutase (411 aa).

The protein belongs to the BPG-independent phosphoglycerate mutase family. A-PGAM subfamily. Homotetramer. Mg(2+) serves as cofactor.

The catalysed reaction is (2R)-2-phosphoglycerate = (2R)-3-phosphoglycerate. It participates in carbohydrate degradation; glycolysis; pyruvate from D-glyceraldehyde 3-phosphate: step 3/5. With respect to regulation, inhibited to approximately 20% by EDTA. Its function is as follows. Catalyzes the interconversion of 2-phosphoglycerate and 3-phosphoglycerate. This chain is 2,3-bisphosphoglycerate-independent phosphoglycerate mutase (apgM), found in Pyrococcus furiosus (strain ATCC 43587 / DSM 3638 / JCM 8422 / Vc1).